The primary structure comprises 198 residues: Peptidyl-tRNA hydrolase (198 aa).

Tyr-15 is a binding site for tRNA. His-20 functions as the Proton acceptor in the catalytic mechanism. Phe-65, Asn-67, and Asn-113 together coordinate tRNA.

This sequence belongs to the PTH family. Monomer.

The protein resides in the cytoplasm. The catalysed reaction is an N-acyl-L-alpha-aminoacyl-tRNA + H2O = an N-acyl-L-amino acid + a tRNA + H(+). Its function is as follows. Hydrolyzes ribosome-free peptidyl-tRNAs (with 1 or more amino acids incorporated), which drop off the ribosome during protein synthesis, or as a result of ribosome stalling. Functionally, catalyzes the release of premature peptidyl moieties from peptidyl-tRNA molecules trapped in stalled 50S ribosomal subunits, and thus maintains levels of free tRNAs and 50S ribosomes. This is Peptidyl-tRNA hydrolase from Ehrlichia chaffeensis (strain ATCC CRL-10679 / Arkansas).